The primary structure comprises 153 residues: MSKPNHPRTLADSEAEAVLRNLRCSPRKLNVVAASIRNKPAGKAVADLTFSKRRIAKDVKKALESAIANAENNHQLDVDRLVVTTADVGRSIVMRRFHARGRGRAARVEKWFSHLRIVVAERDIETKADRRARRAAAKPAASASPAANEGVPA.

Residues 128–153 (ADRRARRAAAKPAASASPAANEGVPA) form a disordered region. Residues 137–147 (AKPAASASPAA) are compositionally biased toward low complexity.

Belongs to the universal ribosomal protein uL22 family. In terms of assembly, part of the 50S ribosomal subunit.

Its function is as follows. This protein binds specifically to 23S rRNA; its binding is stimulated by other ribosomal proteins, e.g. L4, L17, and L20. It is important during the early stages of 50S assembly. It makes multiple contacts with different domains of the 23S rRNA in the assembled 50S subunit and ribosome. In terms of biological role, the globular domain of the protein is located near the polypeptide exit tunnel on the outside of the subunit, while an extended beta-hairpin is found that lines the wall of the exit tunnel in the center of the 70S ribosome. The chain is Large ribosomal subunit protein uL22 from Acidiphilium cryptum (strain JF-5).